The sequence spans 427 residues: Type II methyltransferase M1.BsuMI (427 aa).

Residues 84–427 (INIADLFSGC…SYLLALHQLR (344 aa)) enclose the SAM-dependent MTase C5-type domain. The active site involves cysteine 176.

Belongs to the class I-like SAM-binding methyltransferase superfamily. C5-methyltransferase family. As to quaternary structure, monomer. May form a complex with YdiP, also seems to be active alone.

The enzyme catalyses a 2'-deoxycytidine in DNA + S-adenosyl-L-methionine = a 5-methyl-2'-deoxycytidine in DNA + S-adenosyl-L-homocysteine + H(+). Its activity is regulated as follows. Somewhat inhibited by MgCl(2) and spermidine, strongly inhibited by MnCl(2). A methylase, recognizes the double-stranded sequence 5'-YTCGAR-3', methylates C-3 on both strands, and protects the DNA from cleavage by the BsuMI endonuclease. The sequence is that of Type II methyltransferase M1.BsuMI (ydiO) from Bacillus subtilis (strain 168).